A 455-amino-acid chain; its full sequence is Bifunctional protein GlmU (455 aa).

The interval 1 to 226 (MIAVAILAAG…YQEILGINDR (226 aa)) is pyrophosphorylase. Residues 7–10 (LAAG), K21, Q73, and 78–79 (GT) each bind UDP-N-acetyl-alpha-D-glucosamine. D103 lines the Mg(2+) pocket. UDP-N-acetyl-alpha-D-glucosamine is bound by residues G140, E155, N170, and N224. N224 provides a ligand contact to Mg(2+). Residues 227–247 (KQLATAYKILQDRIKDDWLVA) form a linker region. The N-acetyltransferase stretch occupies residues 248–455 (GVTIMDPDSI…RPISSKQTEK (208 aa)). The UDP-N-acetyl-alpha-D-glucosamine site is built by R329 and K347. H359 functions as the Proton acceptor in the catalytic mechanism. Positions 362 and 373 each coordinate UDP-N-acetyl-alpha-D-glucosamine. Acetyl-CoA is bound by residues A376, 382 to 383 (NY), A419, and R436.

The protein in the N-terminal section; belongs to the N-acetylglucosamine-1-phosphate uridyltransferase family. This sequence in the C-terminal section; belongs to the transferase hexapeptide repeat family. Homotrimer. Mg(2+) serves as cofactor.

It is found in the cytoplasm. The catalysed reaction is alpha-D-glucosamine 1-phosphate + acetyl-CoA = N-acetyl-alpha-D-glucosamine 1-phosphate + CoA + H(+). The enzyme catalyses N-acetyl-alpha-D-glucosamine 1-phosphate + UTP + H(+) = UDP-N-acetyl-alpha-D-glucosamine + diphosphate. Its pathway is nucleotide-sugar biosynthesis; UDP-N-acetyl-alpha-D-glucosamine biosynthesis; N-acetyl-alpha-D-glucosamine 1-phosphate from alpha-D-glucosamine 6-phosphate (route II): step 2/2. It participates in nucleotide-sugar biosynthesis; UDP-N-acetyl-alpha-D-glucosamine biosynthesis; UDP-N-acetyl-alpha-D-glucosamine from N-acetyl-alpha-D-glucosamine 1-phosphate: step 1/1. It functions in the pathway bacterial outer membrane biogenesis; LPS lipid A biosynthesis. Its function is as follows. Catalyzes the last two sequential reactions in the de novo biosynthetic pathway for UDP-N-acetylglucosamine (UDP-GlcNAc). The C-terminal domain catalyzes the transfer of acetyl group from acetyl coenzyme A to glucosamine-1-phosphate (GlcN-1-P) to produce N-acetylglucosamine-1-phosphate (GlcNAc-1-P), which is converted into UDP-GlcNAc by the transfer of uridine 5-monophosphate (from uridine 5-triphosphate), a reaction catalyzed by the N-terminal domain. In Acaryochloris marina (strain MBIC 11017), this protein is Bifunctional protein GlmU.